The following is a 345-amino-acid chain: L-erythro-3,5-diaminohexanoate dehydrogenase (345 aa).

Belongs to the KDD family. Homodimer.

It carries out the reaction (3S,5S)-3,5-diaminohexanoate + NAD(+) + H2O = (5S)-5-amino-3-oxohexanoate + NH4(+) + NADH + H(+). It participates in amino-acid degradation; L-lysine degradation via acetate pathway. Involved in the anaerobic fermentation of lysine. Catalyzes the oxidative deamination of L-erythro-3,5-diaminohexanoate (3,5-DAH) to 3-keto-5-aminohexanoate (KAH). It can use NAD or NADP. This Fusobacterium nucleatum subsp. nucleatum (strain ATCC 25586 / DSM 15643 / BCRC 10681 / CIP 101130 / JCM 8532 / KCTC 2640 / LMG 13131 / VPI 4355) protein is L-erythro-3,5-diaminohexanoate dehydrogenase.